The following is a 40-amino-acid chain: Probable non-specific lipid-transfer protein (40 aa).

This sequence belongs to the plant LTP family. Post-translationally, phosphorylated by Ca(2+)-dependent protein kinase.

In terms of biological role, plant non-specific lipid-transfer proteins transfer phospholipids as well as galactolipids across membranes. May play a role in wax or cutin deposition in the cell walls of expanding epidermal cells and certain secretory tissues. The polypeptide is Probable non-specific lipid-transfer protein (Triticum aestivum (Wheat)).